The chain runs to 182 residues: Neuropeptide CCHamide-1 (182 aa).

An N-terminal signal peptide occupies residues 1–22 (MWYSKCSWTLVVLVALFALVTG). C24 and C31 are disulfide-bonded. The residue at position 35 (H35) is a Histidine amide. A propeptide spanning residues 39-182 (SGGKAVIDAK…ENYSGYELTK (144 aa)) is cleaved from the precursor. 2 disordered regions span residues 67-103 (NNNNNNQNNQDDDNNDDDSNRNTNANSANNIPLAAPA) and 133-154 (QLQDQQQQGRGRGGQGQYDAAA). Residues 87–103 (RNTNANSANNIPLAAPA) are compositionally biased toward low complexity. An N-linked (GlcNAc...) asparagine glycan is attached at N174.

As to expression, expressed in endocrine cells of the larval midgut (at protein level). In the brain, expressed in the optic lobes, lateral protocerebrum, subesophageal ganglion, and intermediate and superior medial protocerebrum (at protein level). Expressed in DN1a neurons but not in other clock neurons and expression follows a rhythmic pattern controlled by the circadian clock (at protein level). In the posterior midgut, expressed in enteroendocrine cells (at protein level). Low levels in larval brain with higher levels in larval and adult gut and adult brain.

It is found in the secreted. Its function is as follows. Neuropeptide ligand for the CCHamide-1 receptor CCHa1-R. Neuromessenger mediating signaling between neuronal cells of the circadian clock network involved in regulation of sleep latency (the time required to fall asleep), amount of sleep and depth of sleep (arousability). Together with PDF, involved in regulating intensity and periodicity of daytime activity. In subsets of clock neurons modulates the rhythmic expression of PDP1 and PDF, and together with PDF modulates the rhythmic expression of circadian protein PER/period, but not TIM/timeless. Mediates signaling from DN1a (anterior dorsal neurons 1) clock neurons to s-LNv (small ventral lateral neurons) clock neurons through CCHa1-R, contributing to regulation of activity rhythms by the circadian clock, particularly in the morning. May be involved in signaling between clock neurons and non-clock neurons, such as the fan-shaped body, involved in sleep homeostasis. In response to a high protein diet mediates hormonal signaling between the gut and a CCHa1-R expressing subset of dopaminergic cells in the protocerebral anterior medial (PAM) cluster of the brain. This suppresses arousability by mechano-sensory stimulation (but not thermal stimulation) but is not involved in regulation of sleep patterns. This chain is Neuropeptide CCHamide-1, found in Drosophila melanogaster (Fruit fly).